We begin with the raw amino-acid sequence, 65 residues long: Large ribosomal subunit protein bL33c (65 aa).

The protein belongs to the bacterial ribosomal protein bL33 family.

Its subcellular location is the plastid. The protein localises to the chloroplast. This Gracilaria tenuistipitata var. liui (Red alga) protein is Large ribosomal subunit protein bL33c.